The primary structure comprises 244 residues: NAD(P)H-quinone oxidoreductase subunit K (244 aa).

Positions 60, 61, 125, and 156 each coordinate [4Fe-4S] cluster.

The protein belongs to the complex I 20 kDa subunit family. As to quaternary structure, NDH-1 can be composed of about 15 different subunits; different subcomplexes with different compositions have been identified which probably have different functions. [4Fe-4S] cluster serves as cofactor.

The protein resides in the cellular thylakoid membrane. The enzyme catalyses a plastoquinone + NADH + (n+1) H(+)(in) = a plastoquinol + NAD(+) + n H(+)(out). It catalyses the reaction a plastoquinone + NADPH + (n+1) H(+)(in) = a plastoquinol + NADP(+) + n H(+)(out). Functionally, NDH-1 shuttles electrons from an unknown electron donor, via FMN and iron-sulfur (Fe-S) centers, to quinones in the respiratory and/or the photosynthetic chain. The immediate electron acceptor for the enzyme in this species is believed to be plastoquinone. Couples the redox reaction to proton translocation, and thus conserves the redox energy in a proton gradient. Cyanobacterial NDH-1 also plays a role in inorganic carbon-concentration. In Prochlorococcus marinus (strain MIT 9515), this protein is NAD(P)H-quinone oxidoreductase subunit K.